Here is a 121-residue protein sequence, read N- to C-terminus: Small ribosomal subunit protein bS6 (121 aa).

It belongs to the bacterial ribosomal protein bS6 family.

Functionally, binds together with bS18 to 16S ribosomal RNA. The polypeptide is Small ribosomal subunit protein bS6 (Rickettsia peacockii (strain Rustic)).